Consider the following 618-residue polypeptide: Mitochondrial Rho GTPase 1 (618 aa).

Over 1 to 592 (MKKDVRILLV…TQADLKSSTF (592 aa)) the chain is Cytoplasmic. The Miro 1 domain occupies 2-168 (KKDVRILLVG…FYYAQKAVLH (167 aa)). Positions 14, 16, 17, 18, and 19 each coordinate GTP. Threonine 18 provides a ligand contact to Mg(2+). Positions 35 and 57 each coordinate Mg(2+). Serine 59 contacts GTP. Residue lysine 92 is modified to N6-acetyllysine. 5 residues coordinate GTP: asparagine 118, lysine 119, aspartate 121, alanine 149, and lysine 150. Residue lysine 153 forms a Glycyl lysine isopeptide (Lys-Gly) (interchain with G-Cter in ubiquitin) linkage. Positions 184–219 (ACIKALTRIFKISDQDNDGTLNDAELNFFQRICFNT) constitute an EF-hand 1 domain. Residues aspartate 197, aspartate 199, aspartate 201, threonine 203, and glutamate 208 each contribute to the Ca(2+) site. A Glycyl lysine isopeptide (Lys-Gly) (interchain with G-Cter in ubiquitin) cross-link involves residue lysine 235. In terms of domain architecture, EF-hand 2 spans 304-339 (HAYLFLQSTFDKHDLDRDCALSPDELKDLFKVFPYI). 5 residues coordinate Ca(2+): aspartate 317, aspartate 319, aspartate 321, alanine 323, and glutamate 328. The 164-residue stretch at 416 to 579 (RNVFRCNVIG…FVKLTTMAMY (164 aa)) folds into the Miro 2 domain. Residues asparagine 428, cysteine 429, glycine 430, lysine 431, serine 432, glycine 433, and lysine 447 each contribute to the GTP site. Asparagine 428 is a Mg(2+) binding site. GDP-binding residues include asparagine 428, cysteine 429, glycine 430, lysine 431, serine 432, glycine 433, lysine 447, lysine 454, serine 477, glutamate 478, lysine 528, aspartate 530, threonine 558, cysteine 559, and asparagine 560. The GTP site is built by lysine 528, aspartate 530, threonine 558, and cysteine 559. Lysine 572 is covalently cross-linked (Glycyl lysine isopeptide (Lys-Gly) (interchain with G-Cter in ubiquitin)). A helical; Anchor for type IV membrane protein transmembrane segment spans residues 593–615 (WLRASFGATVFAVLGFAMYKALL). Over 616–618 (KQR) the chain is Mitochondrial intermembrane.

The protein belongs to the mitochondrial Rho GTPase family. In terms of assembly, homodimer. Interacts with the kinesin-binding proteins TRAK1/OIP106 and TRAK2/GRIF1, forming a link between mitochondria and the trafficking apparatus of the microtubules. Interacts with RAP1GDS1. Interacts with ARMCX1. Found in a complex with KIF5B, OGT, RHOT2 and TRAK1. In terms of processing, ubiquitinated by PRKN during mitophagy, leading to its degradation and enhancement of mitophagy. Deubiquitinated by USP30. Post-translationally, acetylation on Lys-92 decreases sensitivity of mitochondrial transport to elevated Ca(2+) levels, increases mitochondrial transport and promotes axon growth. Deacetylated by HDAC6 which blocks mitochondrial transport and mediates axon growth inhibition. In terms of tissue distribution, ubiquitously expressed. Expressed at high level in heart and skeletal muscle.

The protein localises to the mitochondrion outer membrane. It carries out the reaction GTP + H2O = GDP + phosphate + H(+). The enzyme catalyses ATP + H2O = ADP + phosphate + H(+). The catalysed reaction is UTP + H2O = UDP + phosphate + H(+). Atypical mitochondrial nucleoside-triphosphatase (NTPase) involved in mitochondrial trafficking. Probably involved in control of anterograde transport of mitochondria and their subcellular distribution. Promotes mitochondrial fission during high calcium conditions. Can hydrolyze GTP, ATP and UTP. The chain is Mitochondrial Rho GTPase 1 (RHOT1) from Homo sapiens (Human).